Consider the following 268-residue polypeptide: Methionine aminopeptidase (268 aa).

Residue histidine 79 coordinates substrate. A divalent metal cation contacts are provided by aspartate 97, aspartate 108, and histidine 172. Substrate is bound at residue histidine 179. A divalent metal cation-binding residues include glutamate 205 and glutamate 236.

It belongs to the peptidase M24A family. Methionine aminopeptidase type 1 subfamily. As to quaternary structure, monomer. It depends on Co(2+) as a cofactor. The cofactor is Zn(2+). Mn(2+) is required as a cofactor. Fe(2+) serves as cofactor.

It carries out the reaction Release of N-terminal amino acids, preferentially methionine, from peptides and arylamides.. Removes the N-terminal methionine from nascent proteins. The N-terminal methionine is often cleaved when the second residue in the primary sequence is small and uncharged (Met-Ala-, Cys, Gly, Pro, Ser, Thr, or Val). Requires deformylation of the N(alpha)-formylated initiator methionine before it can be hydrolyzed. In Haemophilus influenzae (strain ATCC 51907 / DSM 11121 / KW20 / Rd), this protein is Methionine aminopeptidase.